The chain runs to 365 residues: Protein-glutamate methylesterase/protein-glutamine glutaminase (365 aa).

Residues 5 to 122 enclose the Response regulatory domain; it reads KVLIVDDSAF…SLDIRKIGEK (118 aa). Asp56 bears the 4-aspartylphosphate mark. Basic and acidic residues predominate over residues 146–155; that stretch reads IKKEKQDESS. Residues 146–167 form a disordered region; that stretch reads IKKEKQDESSTPKPQVEKTSGL. Residues 156 to 167 are compositionally biased toward polar residues; the sequence is TPKPQVEKTSGL. The CheB-type methylesterase domain maps to 177-363; sequence ILIGSSTGGP…LEIIKFAKKI (187 aa). Residues Ser182, His208, and Asp305 contribute to the active site.

It belongs to the CheB family. Phosphorylated by CheA. Phosphorylation of the N-terminal regulatory domain activates the methylesterase activity.

The protein localises to the cytoplasm. The enzyme catalyses [protein]-L-glutamate 5-O-methyl ester + H2O = L-glutamyl-[protein] + methanol + H(+). The catalysed reaction is L-glutaminyl-[protein] + H2O = L-glutamyl-[protein] + NH4(+). Its function is as follows. Involved in chemotaxis. Part of a chemotaxis signal transduction system that modulates chemotaxis in response to various stimuli. Catalyzes the demethylation of specific methylglutamate residues introduced into the chemoreceptors (methyl-accepting chemotaxis proteins or MCP) by CheR. Also mediates the irreversible deamidation of specific glutamine residues to glutamic acid. The protein is Protein-glutamate methylesterase/protein-glutamine glutaminase of Methanococcus maripaludis (strain DSM 14266 / JCM 13030 / NBRC 101832 / S2 / LL).